Reading from the N-terminus, the 424-residue chain is tRNA modification GTPase MnmE (424 aa).

(6S)-5-formyl-5,6,7,8-tetrahydrofolate-binding residues include Arg20, Glu77, and Arg117. Residues 212–351 form the TrmE-type G domain; the sequence is GVRVVFAGPP…LVRDLRDAAR (140 aa). Asn222 lines the K(+) pocket. GTP-binding positions include 222–227, 241–247, and 266–269; these read NAGKST, SPIAGTT, and DTAG. Ser226 is a binding site for Mg(2+). The K(+) site is built by Ser241, Ile243, and Thr246. Thr247 is a binding site for Mg(2+). Lys424 lines the (6S)-5-formyl-5,6,7,8-tetrahydrofolate pocket.

It belongs to the TRAFAC class TrmE-Era-EngA-EngB-Septin-like GTPase superfamily. TrmE GTPase family. As to quaternary structure, homodimer. Heterotetramer of two MnmE and two MnmG subunits. The cofactor is K(+).

The protein localises to the cytoplasm. Functionally, exhibits a very high intrinsic GTPase hydrolysis rate. Involved in the addition of a carboxymethylaminomethyl (cmnm) group at the wobble position (U34) of certain tRNAs, forming tRNA-cmnm(5)s(2)U34. This is tRNA modification GTPase MnmE from Erythrobacter litoralis (strain HTCC2594).